The following is a 403-amino-acid chain: Nodal homolog (403 aa).

The N-terminal stretch at 1 to 18 (MAFLTAVLCFGFACMVQG) is a signal peptide. Positions 19 to 278 (VPSWLESRIP…RMPGIRRHRR (260 aa)) are excised as a propeptide. Asn-68, Asn-133, and Asn-169 each carry an N-linked (GlcNAc...) asparagine glycan. The disordered stretch occupies residues 195–220 (AERGSGMSSAEFLDSPGDSPQYNPHH). Disulfide bonds link Cys-303–Cys-369, Cys-332–Cys-400, and Cys-336–Cys-402. Asn-341 carries an N-linked (GlcNAc...) asparagine glycan.

The protein belongs to the TGF-beta family. In terms of assembly, homodimer; disulfide-linked. Interacts with, and is inhibited by cer1 and gdf10/bmp3b.

The protein resides in the secreted. In terms of biological role, cooperation and regulatory loops of multiple nodals are essential for mesendoderm patterning in early embryos. Essential for mesoderm formation and axial patterning during embryonic development. Activates the activin-like signaling pathway to induce dorsal and ventral mesoderm in animal cap ectoderm. In addition, also dorsalizes ventral marginal zone (VMZ) tissues during gastrulation. Acts in a downstream signaling cascade via cripto and cer1 to mediate cardiogenesis in embryonic mesoderm. Directs the orientation of the left-right axis by driving the left-specific gene cascade in the left lateral plate mesoderm. The chain is Nodal homolog from Xenopus tropicalis (Western clawed frog).